We begin with the raw amino-acid sequence, 634 residues long: E3 ubiquitin/ISG15 ligase TRIM25 (634 aa).

The segment at 13–54 adopts an RING-type zinc-finger fold; sequence CSVCLELFKEPVTTPCGHNFCMSCLDETWVVQGPPYRCPQCR. At T90 the chain carries Phosphothreonine. S99 is modified (phosphoserine). K116 participates in a covalent cross-link: Glycyl lysine isopeptide (Lys-Gly) (interchain with G-Cter in ISG15). The stretch at 215–305 forms a coiled coil; sequence ATKALEDVRS…LIMDKGDEFE (91 aa). Position 272 is an N6-acetyllysine (K272). A Phosphotyrosine modification is found at Y277. The tract at residues 353-437 is disordered; sequence KLQKKSEEHN…APKASAAQPD (85 aa). Residues 363–376 show a composition bias toward polar residues; the sequence is GSGNKGDQTQSTFK. The region spanning 444–634 is the B30.2/SPRY domain; sequence KVLENFLTKS…AGTTLSICSK (191 aa). K572 bears the N6-acetyllysine mark.

Forms homodimers. Interacts (via SPRY domain) with RIGI (via CARD domain). Interacts with ZFHX3. Interacts with NLRP12; this interaction reduces the E3 ubiquitin ligase TRIM25-mediated 'Lys-63'-linked RIGI activation. Interacts with the KHDC3L/FILIA-OOEP/FLOPED scaffold complex and BLM at DNA replication forks. Interacts with RTN3; this interaction prevents RIGI ubiquitination. Interacts with YWHAE. Auto-ISGylated. As to expression, ubiquitous.

The protein resides in the cytoplasm. It localises to the stress granule. It is found in the nucleus. The catalysed reaction is S-ubiquitinyl-[E2 ubiquitin-conjugating enzyme]-L-cysteine + [acceptor protein]-L-lysine = [E2 ubiquitin-conjugating enzyme]-L-cysteine + N(6)-ubiquitinyl-[acceptor protein]-L-lysine.. It catalyses the reaction ATP + [ISG15] + [protein]-lysine = AMP + diphosphate + [protein]-N-ISGyllysine.. The protein operates within protein modification; protein ubiquitination. Functions as a ubiquitin E3 ligase and as an ISG15 E3 ligase. Involved in innate immune defense against viruses by mediating ubiquitination of RIGI and IFIH1. Mediates 'Lys-63'-linked polyubiquitination of the RIGI N-terminal CARD-like region and may play a role in signal transduction that leads to the production of interferons in response to viral infection. Mediates 'Lys-63'-linked polyubiquitination of IFIH1. Promotes ISGylation of 14-3-3 sigma (SFN), an adapter protein implicated in the regulation of a large spectrum signaling pathway. Mediates estrogen action in various target organs. Mediates the ubiquitination and subsequent proteasomal degradation of ZFHX3. Plays a role in promoting the restart of stalled replication forks via interaction with the KHDC3L-OOEP scaffold and subsequent ubiquitination of BLM, resulting in the recruitment and retainment of BLM at DNA replication forks. Plays an essential role in the antiviral activity of ZAP/ZC3HAV1; an antiviral protein which inhibits the replication of certain viruses. Mechanistically, mediates 'Lys-63'-linked polyubiquitination of ZAP/ZC3HAV1 that is required for its optimal binding to target mRNA. Also mediates the ubiquitination of various substrates implicated in stress granule formation, nonsense-mediated mRNA decay, nucleoside synthesis and mRNA translation and stability. In Mus musculus (Mouse), this protein is E3 ubiquitin/ISG15 ligase TRIM25 (Trim25).